We begin with the raw amino-acid sequence, 957 residues long: AP2-associated protein kinase 1 (957 aa).

M1 bears the N-acetylmethionine mark. Over residues 1 to 11 the composition is skewed to basic and acidic residues; that stretch reads MKKFFDSRREQ. A disordered region spans residues 1-25; that stretch reads MKKFFDSRREQGGSGLGSGSSGGGG. Residues 12 to 25 are compositionally biased toward gly residues; sequence GGSGLGSGSSGGGG. At S14 the chain carries Phosphoserine. One can recognise a Protein kinase domain in the interval 46–315; it reads VTVDEVLAEG…QVSYFSFKLL (270 aa). ATP-binding positions include 52–60 and K74; that span reads LAEGGFAIV. D176 acts as the Proton acceptor in catalysis. Y234 carries the phosphotyrosine modification. Position 235 is a phosphoserine (S235). Disordered regions lie at residues 326-506 and 563-629; these read NSPI…AVHP and TAAA…AGHR. Residues T354 and T389 each carry the phosphothreonine modification. The residue at position 391 (R391) is an Omega-N-methylarginine. Over residues 436–448 the composition is skewed to pro residues; it reads PQAPPTSQQPPSA. The residue at position 441 (T441) is a Phosphothreonine. 2 stretches are compositionally biased toward low complexity: residues 449–506 and 563–601; these read PAQA…AVHP and TAAA…KVQT. T602 carries the phosphothreonine modification. The segment covering 607–617 has biased composition (polar residues); sequence IQGQKLGSLTP. The residue at position 614 (S614) is a Phosphoserine. T616 is subject to Phosphothreonine. Phosphoserine is present on residues S619, S620, S633, and S646. At T649 the chain carries Phosphothreonine. Residues 660-697 form a disordered region; sequence SLNKSKSATTTPSGSPRASQQNVYNPSEGSTWNPFDDD. Residues 668–692 show a composition bias toward polar residues; it reads TTTPSGSPRASQQNVYNPSEGSTWN. Y683 carries the phosphotyrosine modification. 4 positions are modified to phosphoserine: S727, S842, S933, and S934. Positions 819–956 are clathrin-binding domain (CBD); that stretch reads EKADVAVESL…SLLLVDQLID (138 aa). 2 disordered regions span residues 832–855 and 919–941; these read LEPP…TDSL and VLIT…ESSL. The span at 840–855 shows a compositional bias: polar residues; sequence LPSQTESVTSNRTDSL. The segment covering 927 to 940 has biased composition (low complexity); that stretch reads GGHSRNSSGSSESS.

It belongs to the protein kinase superfamily. Ser/Thr protein kinase family. As to quaternary structure, interacts (via CBD domain) with clathrin. Interacts with AP-2 complex. Interacts with NUMB. Interacts with alpha-adaptin. Interacts with EPS15 isoform 2. Interacts with membrane-bound activated NOTCH1 but not with the inactive full-length form of NOTCH1. Preferentially interacts with monoubiquitinated activated NOTCH1 compared to the non-ubiquitinated form. In terms of processing, autophosphorylated. In terms of tissue distribution, detected in brain (at protein level).

The protein resides in the cell membrane. It localises to the membrane. Its subcellular location is the clathrin-coated pit. It is found in the presynapse. It carries out the reaction L-seryl-[protein] + ATP = O-phospho-L-seryl-[protein] + ADP + H(+). The catalysed reaction is L-threonyl-[protein] + ATP = O-phospho-L-threonyl-[protein] + ADP + H(+). Its activity is regulated as follows. Stimulated by clathrin. Regulates clathrin-mediated endocytosis by phosphorylating the AP2M1/mu2 subunit of the adaptor protein complex 2 (AP-2) which ensures high affinity binding of AP-2 to cargo membrane proteins during the initial stages of endocytosis. Preferentially, may phosphorylate substrates on threonine residues. Regulates phosphorylation of other AP-2 subunits as well as AP-2 localization and AP-2-mediated internalization of ligand complexes. Phosphorylates NUMB and regulates its cellular localization, promoting NUMB localization to endosomes. Binds to and stabilizes the activated form of NOTCH1, increases its localization in endosomes and regulates its transcriptional activity. The chain is AP2-associated protein kinase 1 (AAK1) from Bos taurus (Bovine).